Here is a 184-residue protein sequence, read N- to C-terminus: UPS-like protein C36.10 (184 aa).

The region spanning 1–172 (MKIFESCHLF…VLEKINMSVF (172 aa)) is the PRELI/MSF1 domain.

Belongs to the slowmo family.

It is found in the cytoplasm. Its subcellular location is the mitochondrion inner membrane. It localises to the mitochondrion intermembrane space. Its function is as follows. Required for mitochondrial morphology. May control phospholipid metabolism in the mitochondrial intermembrane space. This Schizosaccharomyces pombe (strain 972 / ATCC 24843) (Fission yeast) protein is UPS-like protein C36.10.